A 513-amino-acid polypeptide reads, in one-letter code: ATP synthase subunit alpha 2 (513 aa).

169-176 (GDRQTGKT) contacts ATP.

This sequence belongs to the ATPase alpha/beta chains family. F-type ATPases have 2 components, CF(1) - the catalytic core - and CF(0) - the membrane proton channel. CF(1) has five subunits: alpha(3), beta(3), gamma(1), delta(1), epsilon(1). CF(0) has three main subunits: a(1), b(2) and c(9-12). The alpha and beta chains form an alternating ring which encloses part of the gamma chain. CF(1) is attached to CF(0) by a central stalk formed by the gamma and epsilon chains, while a peripheral stalk is formed by the delta and b chains.

It localises to the cell inner membrane. The catalysed reaction is ATP + H2O + 4 H(+)(in) = ADP + phosphate + 5 H(+)(out). Produces ATP from ADP in the presence of a proton gradient across the membrane. The alpha chain is a regulatory subunit. The protein is ATP synthase subunit alpha 2 of Photobacterium profundum (strain SS9).